The primary structure comprises 69 residues: Small, acid-soluble spore protein I (69 aa).

It belongs to the SspI family.

The protein localises to the spore core. The chain is Small, acid-soluble spore protein I from Bacillus cereus (strain G9842).